A 345-amino-acid chain; its full sequence is tRNA N6-adenosine threonylcarbamoyltransferase (345 aa).

Residues His113 and His117 each contribute to the Fe cation site. Residues 142 to 146 (AISGG), Asp175, Gly188, Asp192, and Asn282 each bind substrate. Asp310 provides a ligand contact to Fe cation.

It belongs to the KAE1 / TsaD family. It depends on Fe(2+) as a cofactor.

It is found in the cytoplasm. It catalyses the reaction L-threonylcarbamoyladenylate + adenosine(37) in tRNA = N(6)-L-threonylcarbamoyladenosine(37) in tRNA + AMP + H(+). Functionally, required for the formation of a threonylcarbamoyl group on adenosine at position 37 (t(6)A37) in tRNAs that read codons beginning with adenine. Is involved in the transfer of the threonylcarbamoyl moiety of threonylcarbamoyl-AMP (TC-AMP) to the N6 group of A37, together with TsaE and TsaB. TsaD likely plays a direct catalytic role in this reaction. The sequence is that of tRNA N6-adenosine threonylcarbamoyltransferase from Bdellovibrio bacteriovorus (strain ATCC 15356 / DSM 50701 / NCIMB 9529 / HD100).